The primary structure comprises 223 residues: Ribose-5-phosphate isomerase A (223 aa).

Residues 28–31, 81–84, and 94–97 each bind substrate; these read TGST, DGTD, and KGGG. Catalysis depends on Glu103, which acts as the Proton acceptor. Lys121 serves as a coordination point for substrate.

This sequence belongs to the ribose 5-phosphate isomerase family. As to quaternary structure, homodimer.

It catalyses the reaction aldehydo-D-ribose 5-phosphate = D-ribulose 5-phosphate. The protein operates within carbohydrate degradation; pentose phosphate pathway; D-ribose 5-phosphate from D-ribulose 5-phosphate (non-oxidative stage): step 1/1. Functionally, catalyzes the reversible conversion of ribose-5-phosphate to ribulose 5-phosphate. This chain is Ribose-5-phosphate isomerase A, found in Baumannia cicadellinicola subsp. Homalodisca coagulata.